Here is a 75-residue protein sequence, read N- to C-terminus: Conotoxin VnMSGL-0111 (75 aa).

An N-terminal signal peptide occupies residues 1–20 (MSGLEIMVLTLLLLVSMATS). The propeptide occupies 21 to 44 (HQDGGEKQATQRDAINVRRRSITR). Disulfide bonds link Cys-48-Cys-60, Cys-52-Cys-69, and Cys-59-Cys-73.

The protein belongs to the conotoxin O3 superfamily. As to expression, expressed by the venom duct.

It localises to the secreted. This Conus ventricosus (Mediterranean cone) protein is Conotoxin VnMSGL-0111.